The chain runs to 104 residues: MIPGEFVFGDGDIEINAGAVRLELPIVNTGDRPVQVGSHVHVPQANGALEFDRAAAHGYRFDIPAGTAIRFEPGVAQHVRLIPLGGAREVHGLTLDPPGRLDAS.

It belongs to the urease beta subunit family. As to quaternary structure, heterotrimer of UreA (gamma), UreB (beta) and UreC (alpha) subunits. Three heterotrimers associate to form the active enzyme.

Its subcellular location is the cytoplasm. It carries out the reaction urea + 2 H2O + H(+) = hydrogencarbonate + 2 NH4(+). It functions in the pathway nitrogen metabolism; urea degradation; CO(2) and NH(3) from urea (urease route): step 1/1. The polypeptide is Urease subunit beta (Mycolicibacterium vanbaalenii (strain DSM 7251 / JCM 13017 / BCRC 16820 / KCTC 9966 / NRRL B-24157 / PYR-1) (Mycobacterium vanbaalenii)).